The following is a 130-amino-acid chain: Small ribosomal subunit protein uS9 (130 aa).

Belongs to the universal ribosomal protein uS9 family.

In Bacillus mycoides (strain KBAB4) (Bacillus weihenstephanensis), this protein is Small ribosomal subunit protein uS9.